Consider the following 391-residue polypeptide: S-adenosylmethionine synthase (391 aa).

His-14 serves as a coordination point for ATP. Position 16 (Asp-16) interacts with Mg(2+). Glu-42 serves as a coordination point for K(+). 2 residues coordinate L-methionine: Glu-55 and Gln-98. Residues Gln-98–Glu-108 are flexible loop. ATP is bound by residues Asp-172 to Lys-174, Arg-238 to Phe-239, Asp-247, Arg-253 to Lys-254, Ala-270, and Lys-274. Residue Asp-247 coordinates L-methionine. Residue Lys-278 participates in L-methionine binding.

Belongs to the AdoMet synthase family. As to quaternary structure, homotetramer; dimer of dimers. It depends on Mg(2+) as a cofactor. K(+) serves as cofactor.

Its subcellular location is the cytoplasm. It catalyses the reaction L-methionine + ATP + H2O = S-adenosyl-L-methionine + phosphate + diphosphate. It functions in the pathway amino-acid biosynthesis; S-adenosyl-L-methionine biosynthesis; S-adenosyl-L-methionine from L-methionine: step 1/1. Its function is as follows. Catalyzes the formation of S-adenosylmethionine (AdoMet) from methionine and ATP. The overall synthetic reaction is composed of two sequential steps, AdoMet formation and the subsequent tripolyphosphate hydrolysis which occurs prior to release of AdoMet from the enzyme. The chain is S-adenosylmethionine synthase from Clostridium botulinum (strain Hall / ATCC 3502 / NCTC 13319 / Type A).